We begin with the raw amino-acid sequence, 157 residues long: MSAKNKSNNKTLAENRKARHDYFIEESMEAGIQLVGTEVKSIRAGKSNLKDSYGEIINGEIFIRNMHISPYEKGNIFNRDPLRDRKLLLHKKEIARLLGYTAQQGYTIVPLSLYLKNGRVKVNLAVAKGKKNYDKRDSMLEKAAKRDIERQMKERFR.

This sequence belongs to the SmpB family.

It is found in the cytoplasm. In terms of biological role, required for rescue of stalled ribosomes mediated by trans-translation. Binds to transfer-messenger RNA (tmRNA), required for stable association of tmRNA with ribosomes. tmRNA and SmpB together mimic tRNA shape, replacing the anticodon stem-loop with SmpB. tmRNA is encoded by the ssrA gene; the 2 termini fold to resemble tRNA(Ala) and it encodes a 'tag peptide', a short internal open reading frame. During trans-translation Ala-aminoacylated tmRNA acts like a tRNA, entering the A-site of stalled ribosomes, displacing the stalled mRNA. The ribosome then switches to translate the ORF on the tmRNA; the nascent peptide is terminated with the 'tag peptide' encoded by the tmRNA and targeted for degradation. The ribosome is freed to recommence translation, which seems to be the essential function of trans-translation. The polypeptide is SsrA-binding protein (Clostridium kluyveri (strain NBRC 12016)).